The following is a 211-amino-acid chain: Adenylyl-sulfate kinase (211 aa).

ATP is bound at residue glycine 36–serine 43. The active-site Phosphoserine intermediate is the serine 110.

This sequence belongs to the APS kinase family.

The catalysed reaction is adenosine 5'-phosphosulfate + ATP = 3'-phosphoadenylyl sulfate + ADP + H(+). The protein operates within sulfur metabolism; hydrogen sulfide biosynthesis; sulfite from sulfate: step 2/3. Functionally, catalyzes the synthesis of activated sulfate. This chain is Adenylyl-sulfate kinase (cysC), found in Buchnera aphidicola subsp. Schizaphis graminum (strain Sg).